The primary structure comprises 285 residues: Ribosomal RNA small subunit methyltransferase I (285 aa).

It belongs to the methyltransferase superfamily. RsmI family.

Its subcellular location is the cytoplasm. The enzyme catalyses cytidine(1402) in 16S rRNA + S-adenosyl-L-methionine = 2'-O-methylcytidine(1402) in 16S rRNA + S-adenosyl-L-homocysteine + H(+). In terms of biological role, catalyzes the 2'-O-methylation of the ribose of cytidine 1402 (C1402) in 16S rRNA. The polypeptide is Ribosomal RNA small subunit methyltransferase I (Mycobacterium tuberculosis (strain ATCC 25618 / H37Rv)).